A 691-amino-acid chain; its full sequence is MESSKLLSLLRECTNSTKSLRRIKLVHQRILTLGLRRDVVLCKSLINVYFTCKDHCSARHVFENFDIRSDVYIWNSLMSGYSKNSMFHDTLEVFKRLLNCSICVPDSFTFPNVIKAYGALGREFLGRMIHTLVVKSGYVCDVVVASSLVGMYAKFNLFENSLQVFDEMPERDVASWNTVISCFYQSGEAEKALELFGRMESSGFEPNSVSLTVAISACSRLLWLERGKEIHRKCVKKGFELDEYVNSALVDMYGKCDCLEVAREVFQKMPRKSLVAWNSMIKGYVAKGDSKSCVEILNRMIIEGTRPSQTTLTSILMACSRSRNLLHGKFIHGYVIRSVVNADIYVNCSLIDLYFKCGEANLAETVFSKTQKDVAESWNVMISSYISVGNWFKAVEVYDQMVSVGVKPDVVTFTSVLPACSQLAALEKGKQIHLSISESRLETDELLLSALLDMYSKCGNEKEAFRIFNSIPKKDVVSWTVMISAYGSHGQPREALYQFDEMQKFGLKPDGVTLLAVLSACGHAGLIDEGLKFFSQMRSKYGIEPIIEHYSCMIDILGRAGRLLEAYEIIQQTPETSDNAELLSTLFSACCLHLEHSLGDRIARLLVENYPDDASTYMVLFNLYASGESWDAARRVRLKMKEMGLRKKPGCSWIEMSDKVCHFFAEDRSHLRAENVYECLALLSGHMESGQ.

PPR repeat units lie at residues 38-68 (DVVL…FDIR), 70-104 (DVYI…SICV), 106-140 (DSFT…GYVC), 141-171 (DVVV…MPER), 172-206 (DVAS…GFEP), 207-241 (NSVS…GFEL), 242-272 (DEYV…MPRK), 273-307 (SLVA…GTRP), 308-342 (SQTT…VVNA), 343-373 (DIYV…TQKD), 374-408 (VAES…GVKP), 409-443 (DVVT…RLET), 444-474 (DELL…IPKK), 475-509 (DVVS…GLKP), 510-540 (DGVT…MRSK), and 546-576 (IIEH…TPET). The tract at residues 582-657 (LLSTLFSACC…KPGCSWIEMS (76 aa)) is type E motif. Residues 658 to 688 (DKVCHFFAEDRSHLRAENVYECLALLSGHME) form a type E(+) motif region.

This sequence belongs to the PPR family. PCMP-E subfamily.

In Arabidopsis thaliana (Mouse-ear cress), this protein is Pentatricopeptide repeat-containing protein At5g27110 (PCMP-E14).